The primary structure comprises 878 residues: Serine/threonine-protein kinase D2 (878 aa).

Residues 1–12 are compositionally biased toward low complexity; it reads MATAPSYPAGLP. Positions 1–35 are disordered; that stretch reads MATAPSYPAGLPGSPGPGSPPPPGGLELQSPPPLL. The span at 14–35 shows a compositional bias: pro residues; it reads SPGPGSPPPPGGLELQSPPPLL. Ser-30 is modified (phosphoserine). The residue at position 87 (Tyr-87) is a Phosphotyrosine. Residues 138–188 form a Phorbol-ester/DAG-type 1 zinc finger; sequence PHALTVHSYRAPAFCDHCGEMLFGLVRQGLKCDGCGLNYHKRCAFSIPNNC. Ser-197, Ser-198, Ser-200, Ser-203, Ser-206, Ser-212, and Ser-214 each carry phosphoserine. Residues 224–247 are disordered; the sequence is RSTTELLPRRPPSSSSSSSASSYT. Over residues 236-245 the composition is skewed to low complexity; it reads SSSSSSSASS. Residue Ser-244 is modified to Phosphoserine; by CSNK1D and CSNK1E. Residues 264–314 form a Phorbol-ester/DAG-type 2 zinc finger; that stretch reads PHTFLIHSYTRPTVCQACKKLLKGLFRQGLQCKDCKFNCHKRCATRVPNDC. The disordered stretch occupies residues 343 to 373; the sequence is ESEDSGVIPGSHSENALHASEEEEGEGGKAQ. The PH domain maps to 397-509; it reads TTLREGWVVH…WETAIRQALM (113 aa). Position 407 is a phosphotyrosine (Tyr-407). A Phosphotyrosine; by ABL1 modification is found at Tyr-438. At Ser-518 the chain carries Phosphoserine. Residues 551-807 form the Protein kinase domain; it reads IFPDEVLGSG…VDKSLSHPWL (257 aa). ATP-binding positions include 557–565 and Lys-580; that span reads LGSGQFGVV. Asp-674 acts as the Proton acceptor in catalysis. Ser-706 is modified (phosphoserine; by PKC). Phosphoserine is present on Ser-710. Tyr-717 is subject to Phosphotyrosine; by ABL1. Positions 724-726 match the Important for ABL1-mediated Tyr-717 phosphorylation motif; that stretch reads LNQ. Positions 844 to 869 are disordered; it reads HPLPGSGLPTDRDLGGACPPQDHDMQ. At Ser-876 the chain carries Phosphoserine; by autocatalysis.

This sequence belongs to the protein kinase superfamily. CAMK Ser/Thr protein kinase family. PKD subfamily. As to quaternary structure, interacts (via C-terminus) with LCK. Interacts (via N-terminal AP-rich region) with CIB1 isoform 2. Interacts (via N-terminus and zing-finger domain 1 and 2) with PRKCD in response to oxidative stress; the interaction is independent of PRKD2 tyrosine phosphorylation. It depends on Mg(2+) as a cofactor. Post-translationally, phosphorylation of Ser-876 correlates with the activation status of the kinase. Ser-706 or/and Ser-710 are probably phosphorylated by PKC. Phosphorylation at Ser-244 by CSNK1D and CSNK1E promotes nuclear localization and substrate targeting. Phosphorylation at Ser-244, Ser-706 and Ser-710 is required for nuclear localization. Phosphorylated at Tyr-438 by ABL1 in response to oxidative stress. Phosphorylated at Tyr-717 by ABL1 specifically in response to oxidative stress; requires prior phosphorylation at Ser-706 or/and Ser-710. Widely expressed.

The protein resides in the cytoplasm. The protein localises to the cell membrane. It is found in the nucleus. It localises to the golgi apparatus. Its subcellular location is the trans-Golgi network. The enzyme catalyses L-seryl-[protein] + ATP = O-phospho-L-seryl-[protein] + ADP + H(+). It catalyses the reaction L-threonyl-[protein] + ATP = O-phospho-L-threonyl-[protein] + ADP + H(+). Activated by DAG and phorbol esters. Phorbol-ester/DAG-type domains bind DAG, mediating translocation to membranes. Autophosphorylation of Ser-710 and phosphorylation of Ser-706 by PKC relieves auto-inhibition by the PH domain. Catalytic activity is further increased by phosphorylation at Tyr-717 in response to oxidative stress. Functionally, serine/threonine-protein kinase that converts transient diacylglycerol (DAG) signals into prolonged physiological effects downstream of PKC, and is involved in the regulation of cell proliferation via MAPK1/3 (ERK1/2) signaling, oxidative stress-induced NF-kappa-B activation, inhibition of HDAC7 transcriptional repression, signaling downstream of T-cell antigen receptor (TCR) and cytokine production, and plays a role in Golgi membrane trafficking, angiogenesis, secretory granule release and cell adhesion. May potentiate mitogenesis induced by the neuropeptide bombesin by mediating an increase in the duration of MAPK1/3 (ERK1/2) signaling, which leads to accumulation of immediate-early gene products including FOS that stimulate cell cycle progression. In response to oxidative stress, is phosphorylated at Tyr-438 and Tyr-717 by ABL1, which leads to the activation of PRKD2 without increasing its catalytic activity, and mediates activation of NF-kappa-B. In response to the activation of the gastrin receptor CCKBR, is phosphorylated at Ser-244 by CSNK1D and CSNK1E, translocates to the nucleus, phosphorylates HDAC7, leading to nuclear export of HDAC7 and inhibition of HDAC7 transcriptional repression of NR4A1/NUR77. Upon TCR stimulation, is activated independently of ZAP70, translocates from the cytoplasm to the nucleus and is required for interleukin-2 (IL2) promoter up-regulation. During adaptive immune responses, is required in peripheral T-lymphocytes for the production of the effector cytokines IL2 and IFNG after TCR engagement and for optimal induction of antibody responses to antigens. In epithelial cells stimulated with lysophosphatidic acid (LPA), is activated through a PKC-dependent pathway and mediates LPA-stimulated interleukin-8 (IL8) secretion via a NF-kappa-B-dependent pathway. During TCR-induced T-cell activation, interacts with and is activated by the tyrosine kinase LCK, which results in the activation of the NFAT transcription factors. In the trans-Golgi network (TGN), regulates the fission of transport vesicles that are on their way to the plasma membrane and in polarized cells is involved in the transport of proteins from the TGN to the basolateral membrane. Plays an important role in endothelial cell proliferation and migration prior to angiogenesis, partly through modulation of the expression of KDR/VEGFR2 and FGFR1, two key growth factor receptors involved in angiogenesis. In secretory pathway, is required for the release of chromogranin-A (CHGA)-containing secretory granules from the TGN. Downstream of PRKCA, plays important roles in angiotensin-2-induced monocyte adhesion to endothelial cells. Plays a regulatory role in angiogenesis and tumor growth by phosphorylating a downstream mediator CIB1 isoform 2, resulting in vascular endothelial growth factor A (VEGFA) secretion. The polypeptide is Serine/threonine-protein kinase D2 (PRKD2) (Homo sapiens (Human)).